We begin with the raw amino-acid sequence, 429 residues long: 3-phosphoshikimate 1-carboxyvinyltransferase (429 aa).

Positions 20, 21, and 25 each coordinate 3-phosphoshikimate. Residue Lys-20 participates in phosphoenolpyruvate binding. 2 residues coordinate phosphoenolpyruvate: Gly-89 and Arg-118. 3-phosphoshikimate is bound by residues Ser-164, Ser-165, Gln-166, Ser-192, Asp-311, and Lys-338. Gln-166 serves as a coordination point for phosphoenolpyruvate. The Proton acceptor role is filled by Asp-311. Positions 342 and 384 each coordinate phosphoenolpyruvate.

This sequence belongs to the EPSP synthase family. As to quaternary structure, monomer.

The protein localises to the cytoplasm. The enzyme catalyses 3-phosphoshikimate + phosphoenolpyruvate = 5-O-(1-carboxyvinyl)-3-phosphoshikimate + phosphate. Its pathway is metabolic intermediate biosynthesis; chorismate biosynthesis. Catalyzes the transfer of the enolpyruvyl moiety of phosphoenolpyruvate (PEP) to the 5-hydroxyl of shikimate-3-phosphate (S3P) to produce enolpyruvyl shikimate-3-phosphate and inorganic phosphate. The sequence is that of 3-phosphoshikimate 1-carboxyvinyltransferase from Methanococcus maripaludis (strain C6 / ATCC BAA-1332).